The following is a 1374-amino-acid chain: DNA-directed RNA polymerase subunit beta (1374 aa).

Belongs to the RNA polymerase beta chain family. As to quaternary structure, the RNAP catalytic core consists of 2 alpha, 1 beta, 1 beta' and 1 omega subunit. When a sigma factor is associated with the core the holoenzyme is formed, which can initiate transcription.

The enzyme catalyses RNA(n) + a ribonucleoside 5'-triphosphate = RNA(n+1) + diphosphate. Its function is as follows. DNA-dependent RNA polymerase catalyzes the transcription of DNA into RNA using the four ribonucleoside triphosphates as substrates. The polypeptide is DNA-directed RNA polymerase subunit beta (Acidovorax ebreus (strain TPSY) (Diaphorobacter sp. (strain TPSY))).